The following is a 575-amino-acid chain: Dihydroxy-acid dehydratase (575 aa).

Cys64 serves as a coordination point for [2Fe-2S] cluster. Mg(2+) is bound at residue Asp96. Cys137 contacts [2Fe-2S] cluster. 2 residues coordinate Mg(2+): Asp138 and Lys139. Lys139 carries the post-translational modification N6-carboxylysine. Residue Cys214 participates in [2Fe-2S] cluster binding. Glu465 provides a ligand contact to Mg(2+). Ser491 (proton acceptor) is an active-site residue.

This sequence belongs to the IlvD/Edd family. In terms of assembly, homodimer. The cofactor is [2Fe-2S] cluster. It depends on Mg(2+) as a cofactor.

The catalysed reaction is (2R)-2,3-dihydroxy-3-methylbutanoate = 3-methyl-2-oxobutanoate + H2O. It catalyses the reaction (2R,3R)-2,3-dihydroxy-3-methylpentanoate = (S)-3-methyl-2-oxopentanoate + H2O. It functions in the pathway amino-acid biosynthesis; L-isoleucine biosynthesis; L-isoleucine from 2-oxobutanoate: step 3/4. The protein operates within amino-acid biosynthesis; L-valine biosynthesis; L-valine from pyruvate: step 3/4. Functions in the biosynthesis of branched-chain amino acids. Catalyzes the dehydration of (2R,3R)-2,3-dihydroxy-3-methylpentanoate (2,3-dihydroxy-3-methylvalerate) into 2-oxo-3-methylpentanoate (2-oxo-3-methylvalerate) and of (2R)-2,3-dihydroxy-3-methylbutanoate (2,3-dihydroxyisovalerate) into 2-oxo-3-methylbutanoate (2-oxoisovalerate), the penultimate precursor to L-isoleucine and L-valine, respectively. In Mycobacterium bovis (strain ATCC BAA-935 / AF2122/97), this protein is Dihydroxy-acid dehydratase.